The following is a 396-amino-acid chain: Acetyl-CoA acetyltransferase (396 aa).

Residue C89 is the Acyl-thioester intermediate of the active site. CoA-binding positions include 223-225 and S249; that span reads RKS. Residues H352 and C382 each act as proton acceptor in the active site.

This sequence belongs to the thiolase-like superfamily. Thiolase family.

It is found in the cytoplasm. The enzyme catalyses 2 acetyl-CoA = acetoacetyl-CoA + CoA. It functions in the pathway lipid metabolism; butanoate metabolism. In terms of biological role, involved in syntrophic growth of S.wolfei with butyrate, as part of the butyrate oxidation pathway. Probably catalyzes the beta-keto thiolysis of acetoacetyl-CoA, leading to 2 acetyl-CoA molecules. This chain is Acetyl-CoA acetyltransferase, found in Syntrophomonas wolfei subsp. wolfei (strain DSM 2245B / Goettingen).